A 521-amino-acid chain; its full sequence is FAD-dependent monooxygenase DEP2 (521 aa).

A signal peptide spans Met1–Ala22. FAD contacts are provided by Asp36 and Arg109. Residues Asn139 and Asn220 are each glycosylated (N-linked (GlcNAc...) asparagine). 2 residues coordinate FAD: Asp310 and Gly323. The chain crosses the membrane as a helical span at residues Ile477–Gly497. Asn515 is a glycosylation site (N-linked (GlcNAc...) asparagine).

This sequence belongs to the paxM FAD-dependent monooxygenase family. The cofactor is FAD.

Its subcellular location is the membrane. The protein operates within polyketide biosynthesis. In terms of biological role, part of the gene cluster that mediates the biosynthesis of depudecin, a highly oxidized eleven-carbon linear polyketide that acts as a histone deacetylase (HDAC) inhibitor and makes a small contribution to pathogenesis. The reducing polyketide synthase DEP5 is the central enzyme in depudecin biosynthesis by yielding the backbone polyketide chain. The monooxygenases DEP2 and DEP4, as well as the uncharacterized protein DEP1, then act as tailoring enzymes to modify the intermediate polyketide chain into depudecin. This is FAD-dependent monooxygenase DEP2 from Fusarium langsethiae.